A 155-amino-acid chain; its full sequence is SsrA-binding protein (155 aa).

The protein belongs to the SmpB family.

The protein localises to the cytoplasm. In terms of biological role, required for rescue of stalled ribosomes mediated by trans-translation. Binds to transfer-messenger RNA (tmRNA), required for stable association of tmRNA with ribosomes. tmRNA and SmpB together mimic tRNA shape, replacing the anticodon stem-loop with SmpB. tmRNA is encoded by the ssrA gene; the 2 termini fold to resemble tRNA(Ala) and it encodes a 'tag peptide', a short internal open reading frame. During trans-translation Ala-aminoacylated tmRNA acts like a tRNA, entering the A-site of stalled ribosomes, displacing the stalled mRNA. The ribosome then switches to translate the ORF on the tmRNA; the nascent peptide is terminated with the 'tag peptide' encoded by the tmRNA and targeted for degradation. The ribosome is freed to recommence translation, which seems to be the essential function of trans-translation. This is SsrA-binding protein from Streptococcus equi subsp. zooepidemicus (strain MGCS10565).